A 238-amino-acid chain; its full sequence is Ribonuclease HII (238 aa).

Residues 12–197 (GIVAGVDEAG…VLELLTDDLL (186 aa)) form the RNase H type-2 domain. 3 residues coordinate a divalent metal cation: D18, E19, and D107.

Belongs to the RNase HII family. Requires Mn(2+) as cofactor. Mg(2+) serves as cofactor.

The protein localises to the cytoplasm. It catalyses the reaction Endonucleolytic cleavage to 5'-phosphomonoester.. Endonuclease that specifically degrades the RNA of RNA-DNA hybrids. The sequence is that of Ribonuclease HII (rnhB) from Thermotoga maritima (strain ATCC 43589 / DSM 3109 / JCM 10099 / NBRC 100826 / MSB8).